The sequence spans 123 residues: Cysteine-rich DPF motif domain-containing protein 1 (123 aa).

Positions 102 to 123 (RQDLEKRKAPSKRTPSQPGSRT) are disordered. A compositionally biased stretch (polar residues) spans 114–123 (RTPSQPGSRT).

It belongs to the CDPF1 family.

This chain is Cysteine-rich DPF motif domain-containing protein 1 (CDPF1), found in Homo sapiens (Human).